The chain runs to 459 residues: Hypotaurine/taurine--pyruvate aminotransferase (459 aa).

K287 is modified (N6-(pyridoxal phosphate)lysine).

It belongs to the class-III pyridoxal-phosphate-dependent aminotransferase family. Pyridoxal 5'-phosphate is required as a cofactor.

It catalyses the reaction hypotaurine + pyruvate = 2-sulfinoacetaldehyde + L-alanine. The catalysed reaction is taurine + pyruvate = sulfoacetaldehyde + L-alanine. It participates in organosulfur degradation. In terms of biological role, converts hypotaurine to alanine and sulfinoacetaldehyde, which desulfinates spontaneously to acetaldehyde and sulfite. Can also catalyze the degradation of taurine into alanine and sulfoacetaldehyde, which is stable. Has 2-fold higher aminotransferase activity with hypotaurine as the substrate. The protein is Hypotaurine/taurine--pyruvate aminotransferase of Paracoccus denitrificans (strain Pd 1222).